The chain runs to 168 residues: Peptide deformylase 1 (168 aa).

The Fe cation site is built by Cys91 and His133. Glu134 is an active-site residue. His137 contacts Fe cation.

This sequence belongs to the polypeptide deformylase family. It depends on Fe(2+) as a cofactor.

It catalyses the reaction N-terminal N-formyl-L-methionyl-[peptide] + H2O = N-terminal L-methionyl-[peptide] + formate. Its function is as follows. Removes the formyl group from the N-terminal Met of newly synthesized proteins. Requires at least a dipeptide for an efficient rate of reaction. N-terminal L-methionine is a prerequisite for activity but the enzyme has broad specificity at other positions. This is Peptide deformylase 1 from Vibrio vulnificus (strain YJ016).